The following is a 332-amino-acid chain: Phosphoribosylformylglycinamidine cyclo-ligase (332 aa).

It belongs to the AIR synthase family.

It is found in the cytoplasm. It catalyses the reaction 2-formamido-N(1)-(5-O-phospho-beta-D-ribosyl)acetamidine + ATP = 5-amino-1-(5-phospho-beta-D-ribosyl)imidazole + ADP + phosphate + H(+). It participates in purine metabolism; IMP biosynthesis via de novo pathway; 5-amino-1-(5-phospho-D-ribosyl)imidazole from N(2)-formyl-N(1)-(5-phospho-D-ribosyl)glycinamide: step 2/2. In Clostridium acetobutylicum (strain ATCC 824 / DSM 792 / JCM 1419 / IAM 19013 / LMG 5710 / NBRC 13948 / NRRL B-527 / VKM B-1787 / 2291 / W), this protein is Phosphoribosylformylglycinamidine cyclo-ligase.